A 393-amino-acid polypeptide reads, in one-letter code: MFVHLLVLLFAAVEAIPTGRFEVVYPSMVTFRSGIKRIRFRALDEDIELRLEPAGDVIADDFTVINGENGEVDHSVNIQSLKRKLYKDAKVGAALHIDEDGSLIINGIVNSKLRIEPDTSKKASRNGIIAHRVIEVIEDEQLFHDVIILPPGLTRTFNYSEPLPDDKCVKIEYVFVTESSFTKSFQISSMETYLANMMNMVKIMFDSLDLGIEVAIIGIIKLTKENEAKLAPYIPLCSREMDSRETLDDMAEFYCNSADKLIQNADIVTLITTRPLGTFDENGYFFNIHLGIAFLDNICVYCYKYAIVKEDTGIYQLANTVAHESAHLLGCDHDGEKGSLDCSARDGYIMSWNNEKIGKKFSPCCKKRVEELITRRKINHCIVETCDGKRKRN.

The signal sequence occupies residues 1–15 (MFVHLLVLLFAAVEA). Asn158 carries N-linked (GlcNAc...) asparagine glycosylation. The Peptidase M12B domain occupies 167–377 (KCVKIEYVFV…RVEELITRRK (211 aa)). A Zn(2+)-binding site is contributed by His323. The active site involves Glu324. Residues His327 and His333 each contribute to the Zn(2+) site. The tract at residues 378 to 393 (INHCIVETCDGKRKRN) is disintegrin-like domain.

This sequence belongs to the venom metalloproteinase (M12B) family. Requires Zn(2+) as cofactor. Post-translationally, contains several disulfide bonds. In terms of tissue distribution, expressed by the venom gland.

The protein resides in the secreted. Metalloprotease. The sequence is that of Venom metalloproteinase BumaMPs1 from Olivierus martensii (Manchurian scorpion).